We begin with the raw amino-acid sequence, 196 residues long: Holliday junction branch migration complex subunit RuvA (196 aa).

Residues 1–63 (MINKIHGKVI…ENELKLFGFL (63 aa)) form a domain I region. The tract at residues 64–139 (NSDERETFKS…KLLINNELES (76 aa)) is domain II. Ser-139 is a region of interest (flexible linker). The domain III stretch occupies residues 139-196 (SSLFGFKELEESIVSMGFDRKIVNSKLKEACDLIEFSNLKDSEKEQFLFKEVLKRMSN).

This sequence belongs to the RuvA family. Homotetramer. Forms an RuvA(8)-RuvB(12)-Holliday junction (HJ) complex. HJ DNA is sandwiched between 2 RuvA tetramers; dsDNA enters through RuvA and exits via RuvB. An RuvB hexamer assembles on each DNA strand where it exits the tetramer. Each RuvB hexamer is contacted by two RuvA subunits (via domain III) on 2 adjacent RuvB subunits; this complex drives branch migration. In the full resolvosome a probable DNA-RuvA(4)-RuvB(12)-RuvC(2) complex forms which resolves the HJ.

It localises to the cytoplasm. Functionally, the RuvA-RuvB-RuvC complex processes Holliday junction (HJ) DNA during genetic recombination and DNA repair, while the RuvA-RuvB complex plays an important role in the rescue of blocked DNA replication forks via replication fork reversal (RFR). RuvA specifically binds to HJ cruciform DNA, conferring on it an open structure. The RuvB hexamer acts as an ATP-dependent pump, pulling dsDNA into and through the RuvAB complex. HJ branch migration allows RuvC to scan DNA until it finds its consensus sequence, where it cleaves and resolves the cruciform DNA. The polypeptide is Holliday junction branch migration complex subunit RuvA (Borrelia garinii subsp. bavariensis (strain ATCC BAA-2496 / DSM 23469 / PBi) (Borreliella bavariensis)).